A 427-amino-acid polypeptide reads, in one-letter code: Adenylosuccinate synthetase (427 aa).

GTP-binding positions include 12–18 (GDEGKGK) and 40–42 (GHT). D13 (proton acceptor) is an active-site residue. D13 and G40 together coordinate Mg(2+). Residues 13–16 (DEGK), 38–41 (NAGH), T131, R145, Q226, T241, and R305 each bind IMP. H41 serves as the catalytic Proton donor. 301–307 (ATTGRKR) is a binding site for substrate. GTP-binding positions include R307, 333 to 335 (KLD), and 415 to 417 (SVG).

Belongs to the adenylosuccinate synthetase family. As to quaternary structure, homodimer. It depends on Mg(2+) as a cofactor.

Its subcellular location is the cytoplasm. The catalysed reaction is IMP + L-aspartate + GTP = N(6)-(1,2-dicarboxyethyl)-AMP + GDP + phosphate + 2 H(+). Its pathway is purine metabolism; AMP biosynthesis via de novo pathway; AMP from IMP: step 1/2. Plays an important role in the de novo pathway of purine nucleotide biosynthesis. Catalyzes the first committed step in the biosynthesis of AMP from IMP. The polypeptide is Adenylosuccinate synthetase (Oleidesulfovibrio alaskensis (strain ATCC BAA-1058 / DSM 17464 / G20) (Desulfovibrio alaskensis)).